The primary structure comprises 264 residues: uncharacterized protein (264 aa).

6 helical membrane passes run 23-43, 59-79, 91-111, 150-170, 190-210, and 233-253; these read LIFLAPFSLFTQIFMVITALI, FDTFTYQSNSLAIFLVWYYFL, LVLSVTGYLVFTVIFFNFYAL, FSELLLHVIHPLFYFIYVGLL, AGIYPSIYAFYLQTIPFLNVW, and WIWSIPIFASMFLILWMLFVI.

Its subcellular location is the cell membrane. This is an uncharacterized protein from Mycoplasma genitalium (strain ATCC 33530 / DSM 19775 / NCTC 10195 / G37) (Mycoplasmoides genitalium).